The chain runs to 213 residues: Pyridoxine/pyridoxamine 5'-phosphate oxidase (213 aa).

Residues 57 to 62, 77 to 78, R83, K84, and Q106 contribute to the FMN site; these read RIVLLR and FT. R62 contacts substrate. Substrate is bound by residues Y124, R128, and S132. Residues 135–163 form a disordered region; it reads GARASDQSRPLPDRKTLQKRVEEEEARYP. 141–142 is an FMN binding site; that stretch reads QS. Basic and acidic residues predominate over residues 145–163; the sequence is LPDRKTLQKRVEEEEARYP. W186 contacts FMN. Position 192 to 194 (192 to 194) interacts with substrate; it reads RLH. R196 serves as a coordination point for FMN.

It belongs to the pyridoxamine 5'-phosphate oxidase family. In terms of assembly, homodimer. FMN serves as cofactor.

It catalyses the reaction pyridoxamine 5'-phosphate + O2 + H2O = pyridoxal 5'-phosphate + H2O2 + NH4(+). It carries out the reaction pyridoxine 5'-phosphate + O2 = pyridoxal 5'-phosphate + H2O2. It functions in the pathway cofactor metabolism; pyridoxal 5'-phosphate salvage; pyridoxal 5'-phosphate from pyridoxamine 5'-phosphate: step 1/1. Its pathway is cofactor metabolism; pyridoxal 5'-phosphate salvage; pyridoxal 5'-phosphate from pyridoxine 5'-phosphate: step 1/1. Catalyzes the oxidation of either pyridoxine 5'-phosphate (PNP) or pyridoxamine 5'-phosphate (PMP) into pyridoxal 5'-phosphate (PLP). The protein is Pyridoxine/pyridoxamine 5'-phosphate oxidase of Granulibacter bethesdensis (strain ATCC BAA-1260 / CGDNIH1).